Consider the following 418-residue polypeptide: 3-isopropylmalate dehydratase large subunit (418 aa).

Residues cysteine 299, cysteine 359, and cysteine 362 each contribute to the [4Fe-4S] cluster site.

It belongs to the aconitase/IPM isomerase family. LeuC type 2 subfamily. Heterodimer of LeuC and LeuD. Requires [4Fe-4S] cluster as cofactor.

The enzyme catalyses (2R,3S)-3-isopropylmalate = (2S)-2-isopropylmalate. It functions in the pathway amino-acid biosynthesis; L-leucine biosynthesis; L-leucine from 3-methyl-2-oxobutanoate: step 2/4. Catalyzes the isomerization between 2-isopropylmalate and 3-isopropylmalate, via the formation of 2-isopropylmaleate. The polypeptide is 3-isopropylmalate dehydratase large subunit (Oleidesulfovibrio alaskensis (strain ATCC BAA-1058 / DSM 17464 / G20) (Desulfovibrio alaskensis)).